The primary structure comprises 151 residues: Large ribosomal subunit protein bL9 (151 aa).

The protein belongs to the bacterial ribosomal protein bL9 family.

In terms of biological role, binds to the 23S rRNA. The sequence is that of Large ribosomal subunit protein bL9 from Francisella tularensis subsp. holarctica (strain LVS).